We begin with the raw amino-acid sequence, 673 residues long: Probable urea active transporter 2 (673 aa).

14 consecutive transmembrane segments (helical) span residues 8–28 (GYGY…MAII), 83–103 (IMGG…FLFL), 132–152 (VYLF…LLGG), 164–184 (TVAA…LGGL), 196–218 (VMIY…LIGS), 249–269 (MMYL…GDPG), 287–307 (LMGG…AGLA), 336–356 (IYGM…VMLF), 391–411 (QLVR…GALS), 424–446 (LLTF…LFWN), 451–471 (FSLV…WLAS), 492–512 (FVGN…LSYI), 559–579 (IGIN…ALLG), and 592–612 (LIIV…LFPL).

The protein belongs to the sodium:solute symporter (SSF) (TC 2.A.21) family.

It is found in the endoplasmic reticulum membrane. Its function is as follows. Involved in active transport of urea. This Schizosaccharomyces pombe (strain 972 / ATCC 24843) (Fission yeast) protein is Probable urea active transporter 2 (dur3-2).